A 300-amino-acid chain; its full sequence is DNA repair protein RecO (300 aa).

It belongs to the RecO family.

Involved in DNA repair and RecF pathway recombination. This is DNA repair protein RecO from Nostoc punctiforme (strain ATCC 29133 / PCC 73102).